The sequence spans 282 residues: Acyl-CoA-binding domain-containing protein 6 (282 aa).

Residues 1–12 (MASSFLPSGATT) are compositionally biased toward polar residues. Residues 1 to 34 (MASSFLPSGATTGDSGGELSSGDDSGDVESLQSP) are disordered. Positions 17 to 31 (GELSSGDDSGDVESL) are enriched in low complexity. A Phosphoserine modification is found at serine 41. Residues 42–127 (LPELFEKAAE…VKKLDPSWNP (86 aa)) form the ACB domain. Residues 69 to 73 (YARYK) and lysine 95 contribute to the an acyl-CoA site. Residue serine 106 is modified to Phosphoserine. Residue tyrosine 114 coordinates an acyl-CoA. ANK repeat units lie at residues 191–220 (EGRTLLHWACDRGHKELVTVLLQYRADINC) and 224–253 (EGQTALHYAAACEFLDIVELLLQSGADPTL).

Monomer.

The protein localises to the cytoplasm. Binds long-chain acyl-coenzyme A molecules with a strong preference for unsaturated C18:1-CoA, lower affinity for unsaturated C20:4-CoA, and very weak affinity for saturated C16:0-CoA. Does not bind fatty acids. This Bos taurus (Bovine) protein is Acyl-CoA-binding domain-containing protein 6 (ACBD6).